The sequence spans 99 residues: DNA-directed RNA polymerase subunit omega (99 aa).

Residues 1–10 (MSSTSAASAA) show a composition bias toward low complexity. Residues 1-20 (MSSTSAASAAGQGALPAYDT) form a disordered region.

It belongs to the RNA polymerase subunit omega family. As to quaternary structure, the RNAP catalytic core consists of 2 alpha, 1 beta, 1 beta' and 1 omega subunit. When a sigma factor is associated with the core the holoenzyme is formed, which can initiate transcription.

It catalyses the reaction RNA(n) + a ribonucleoside 5'-triphosphate = RNA(n+1) + diphosphate. Its function is as follows. Promotes RNA polymerase assembly. Latches the N- and C-terminal regions of the beta' subunit thereby facilitating its interaction with the beta and alpha subunits. In Rhodococcus erythropolis (strain PR4 / NBRC 100887), this protein is DNA-directed RNA polymerase subunit omega.